The following is a 282-amino-acid chain: Probable endonuclease 4 (282 aa).

Zn(2+) is bound by residues histidine 69, histidine 109, glutamate 145, aspartate 179, histidine 182, histidine 216, aspartate 229, histidine 231, and glutamate 261.

The protein belongs to the AP endonuclease 2 family. Zn(2+) serves as cofactor.

The enzyme catalyses Endonucleolytic cleavage to 5'-phosphooligonucleotide end-products.. Endonuclease IV plays a role in DNA repair. It cleaves phosphodiester bonds at apurinic or apyrimidinic (AP) sites, generating a 3'-hydroxyl group and a 5'-terminal sugar phosphate. In Campylobacter hominis (strain ATCC BAA-381 / DSM 21671 / CCUG 45161 / LMG 19568 / NCTC 13146 / CH001A), this protein is Probable endonuclease 4.